Consider the following 166-residue polypeptide: Regulatory protein RecX (166 aa).

Belongs to the RecX family.

The protein localises to the cytoplasm. Modulates RecA activity. This Escherichia coli O139:H28 (strain E24377A / ETEC) protein is Regulatory protein RecX.